Here is a 97-residue protein sequence, read N- to C-terminus: YcgL domain-containing protein PA1295 (97 aa).

The 85-residue stretch at 3 to 87 (RICSVYKSPR…GEEEYIEHLP (85 aa)) folds into the YcgL domain.

The chain is YcgL domain-containing protein PA1295 from Pseudomonas aeruginosa (strain ATCC 15692 / DSM 22644 / CIP 104116 / JCM 14847 / LMG 12228 / 1C / PRS 101 / PAO1).